The chain runs to 188 residues: MAAAPGARLLRAACASVAFRGLDCRRLLVCGTRAGPAVPQWTPSPHTLAEAGPGRPLSVSARARSSSEDKVTVHFKNRDGETLTTKGKVGDSLLDVVIENNLDIDGFGACEGTLACSTCHLIFEDHIYEKLDAITDEENDMLDLAFGLTNRSRLGCQVCLTKAMDNMTVRVPEAVADVRQSVDMSKNS.

The N-terminal 64 residues, 1–64 (MAAAPGARLL…RPLSVSARAR (64 aa)), are a transit peptide targeting the mitochondrion. At serine 67 the chain carries Phosphoserine. Positions 69-175 (DKVTVHFKNR…NMTVRVPEAV (107 aa)) constitute a 2Fe-2S ferredoxin-type domain. Residue lysine 70 is modified to N6-acetyllysine; alternate. Lysine 70 carries the post-translational modification N6-succinyllysine; alternate. [2Fe-2S] cluster-binding residues include cysteine 110, cysteine 116, cysteine 119, and cysteine 156. Lysine 162 carries the post-translational modification N6-succinyllysine. At serine 181 the chain carries Phosphoserine.

It belongs to the adrenodoxin/putidaredoxin family. In terms of assembly, interacts with CYP11A1. [2Fe-2S] cluster is required as a cofactor. In terms of tissue distribution, found in all tissues, most abundant in adrenals, ovaries and testes.

The protein localises to the mitochondrion matrix. Essential for the synthesis of various steroid hormones. Participates in the reduction of mitochondrial cytochrome P450 for steroidogenesis. Transfers electrons from adrenodoxin reductase to CYP11A1, a cytochrome P450 that catalyzes cholesterol side-chain cleavage. Does not form a ternary complex with adrenodoxin reductase and CYP11A1 but shuttles between the two enzymes to transfer electrons. The polypeptide is Adrenodoxin, mitochondrial (Fdx1) (Rattus norvegicus (Rat)).